Here is a 429-residue protein sequence, read N- to C-terminus: Protein S-Myc (429 aa).

At Y36 the chain carries Phosphotyrosine; by Tyr-kinases. The tract at residues 301–325 (PLPYAEDARPLKKPRSQDPLGPLKC) is disordered. A bHLH domain is found at 346 to 398 (ERRRNHNRMERQRRDIMRSSFLNLRDLVPELVHNEKAAKVVILKKATEYIHTL). Residues 398–419 (LQTDESKLLVEREKLYERKQQL) are leucine-zipper.

As to quaternary structure, efficient DNA binding requires dimerization with another bHLH protein.

The protein localises to the nucleus. Its function is as follows. Has apoptosis-inducing activity. This chain is Protein S-Myc (Mycs), found in Rattus norvegicus (Rat).